Reading from the N-terminus, the 68-residue chain is Large ribosomal subunit protein bL31 (68 aa).

Zn(2+) is bound by residues Cys16, Cys18, Cys36, and Cys39.

Belongs to the bacterial ribosomal protein bL31 family. Type A subfamily. Part of the 50S ribosomal subunit. Zn(2+) is required as a cofactor.

In terms of biological role, binds the 23S rRNA. This chain is Large ribosomal subunit protein bL31, found in Sorangium cellulosum (strain So ce56) (Polyangium cellulosum (strain So ce56)).